The chain runs to 207 residues: Guanylate kinase (207 aa).

In terms of domain architecture, Guanylate kinase-like spans 4-184; the sequence is GTLYIVSAPS…ALTDLKTIIR (181 aa). 11 to 18 serves as a coordination point for ATP; sequence APSGAGKS.

This sequence belongs to the guanylate kinase family.

It is found in the cytoplasm. The catalysed reaction is GMP + ATP = GDP + ADP. Its function is as follows. Essential for recycling GMP and indirectly, cGMP. This chain is Guanylate kinase, found in Escherichia coli O157:H7.